The primary structure comprises 93 residues: Cell division protein CrgA (93 aa).

Helical transmembrane passes span 31-51 (VWFVALFIGLMLIGLVWLMVF) and 70-90 (LGPWNYAIAFAFMITGLLLTM).

Belongs to the CrgA family.

It localises to the cell membrane. Involved in cell division. The polypeptide is Cell division protein CrgA (Mycobacterium marinum (strain ATCC BAA-535 / M)).